A 350-amino-acid chain; its full sequence is WUSCHEL-related homeobox 1 (350 aa).

A DNA-binding region (homeobox; WUS-type) is located at residues 72-136; sequence MVSSRWNPTP…NHKARERQKR (65 aa). The segment at 283 to 308 is disordered; that stretch reads TNTETCHRNGDDNKDQEQHEDCSNGE.

Belongs to the WUS homeobox family.

Its subcellular location is the nucleus. Transcription factor which may be involved in developmental processes. The protein is WUSCHEL-related homeobox 1 (WOX1) of Arabidopsis thaliana (Mouse-ear cress).